The chain runs to 427 residues: Nuclear distribution protein PAC1-2 (427 aa).

A LisH domain is found at 8-40 (QKDDLNKSIAEYLYAQDLTEIADSLCARLSLDY). The stretch at 58 to 82 (SVIRLQKKLIESENRYTALQEDIAA) forms a coiled coil. WD repeat units lie at residues 106 to 147 (SHRA…RTLK), 149 to 187 (HTRE…NAGY), 194 to 233 (GHEH…CIRT), 236 to 275 (GHED…MKME), 278 to 336 (GHGH…ELRT), 339 to 378 (GHND…CMXV), and 381 to 420 (AHSH…SRIM).

It belongs to the WD repeat LIS1/nudF family. As to quaternary structure, self-associates. Interacts with NDL1 and dynein.

Its subcellular location is the cytoplasm. The protein resides in the cytoskeleton. It is found in the spindle pole. In terms of biological role, positively regulates the activity of the minus-end directed microtubule motor protein dynein. May enhance dynein-mediated microtubule sliding by targeting dynein to the microtubule plus end. Required for nuclear migration during vegetative growth as well as development. Required for retrograde early endosome (EE) transport from the hyphal tip. Required for localization of dynein to the mitotic spindle poles. Recruits additional proteins to the dynein complex at SPBs. This chain is Nuclear distribution protein PAC1-2, found in Postia placenta (strain ATCC 44394 / Madison 698-R) (Brown rot fungus).